The following is an 883-amino-acid chain: DNA mismatch repair protein MutS (883 aa).

619–626 (GPNMGGKS) lines the ATP pocket.

This sequence belongs to the DNA mismatch repair MutS family.

Functionally, this protein is involved in the repair of mismatches in DNA. It is possible that it carries out the mismatch recognition step. This protein has a weak ATPase activity. This chain is DNA mismatch repair protein MutS, found in Marinomonas sp. (strain MWYL1).